The primary structure comprises 622 residues: 1,4-alpha-glucan branching enzyme GlgB (622 aa).

Asp300 functions as the Nucleophile in the catalytic mechanism. The active-site Proton donor is Glu351.

This sequence belongs to the glycosyl hydrolase 13 family. GlgB subfamily. As to quaternary structure, monomer.

It carries out the reaction Transfers a segment of a (1-&gt;4)-alpha-D-glucan chain to a primary hydroxy group in a similar glucan chain.. The protein operates within glycan biosynthesis; glycogen biosynthesis. Catalyzes the formation of the alpha-1,6-glucosidic linkages in glycogen by scission of a 1,4-alpha-linked oligosaccharide from growing alpha-1,4-glucan chains and the subsequent attachment of the oligosaccharide to the alpha-1,6 position. The sequence is that of 1,4-alpha-glucan branching enzyme GlgB from Streptococcus agalactiae serotype V (strain ATCC BAA-611 / 2603 V/R).